The following is a 212-amino-acid chain: 3-oxo-tetronate 4-phosphate decarboxylase (212 aa).

The active-site Proton acceptor is glutamate 79. 3 residues coordinate Zn(2+): glutamate 79, histidine 98, and histidine 100. Tyrosine 125 serves as the catalytic Proton donor. Position 165 (histidine 165) interacts with Zn(2+).

The protein belongs to the aldolase class II family. AraD/FucA subfamily. It depends on Zn(2+) as a cofactor.

The catalysed reaction is 3-dehydro-4-O-phospho-D-erythronate + H(+) = dihydroxyacetone phosphate + CO2. It catalyses the reaction 3-dehydro-4-O-phospho-L-erythronate + H(+) = dihydroxyacetone phosphate + CO2. In terms of biological role, catalyzes the decarboxylation of 3-oxo-tetronate 4-phosphate to dihydroxyacetone phosphate (DHAP) and CO(2). The polypeptide is 3-oxo-tetronate 4-phosphate decarboxylase (Escherichia coli O6:H1 (strain CFT073 / ATCC 700928 / UPEC)).